The sequence spans 179 residues: MYEYLDRRYALALYEVAEENNKVDEYLRDLKEVVNIIKNSEDICKILKHPEINTSRKKEIFTELFKDKVDDKILSFLLVLIEKDRILYLEEKLKEMEKIYLEKNNMILANIKTVIPLLKEEREELIEKLGNKYNKKIILEEEIDKSIIGGVYVRVGDDVLDGTLSTRLKDIKKMMLKRE.

It belongs to the ATPase delta chain family. As to quaternary structure, F-type ATPases have 2 components, F(1) - the catalytic core - and F(0) - the membrane proton channel. F(1) has five subunits: alpha(3), beta(3), gamma(1), delta(1), epsilon(1). F(0) has three main subunits: a(1), b(2) and c(10-14). The alpha and beta chains form an alternating ring which encloses part of the gamma chain. F(1) is attached to F(0) by a central stalk formed by the gamma and epsilon chains, while a peripheral stalk is formed by the delta and b chains.

The protein resides in the cell membrane. Its function is as follows. F(1)F(0) ATP synthase produces ATP from ADP in the presence of a proton or sodium gradient. F-type ATPases consist of two structural domains, F(1) containing the extramembraneous catalytic core and F(0) containing the membrane proton channel, linked together by a central stalk and a peripheral stalk. During catalysis, ATP synthesis in the catalytic domain of F(1) is coupled via a rotary mechanism of the central stalk subunits to proton translocation. In terms of biological role, this protein is part of the stalk that links CF(0) to CF(1). It either transmits conformational changes from CF(0) to CF(1) or is implicated in proton conduction. The polypeptide is ATP synthase subunit delta (Clostridium botulinum (strain ATCC 19397 / Type A)).